Consider the following 595-residue polypeptide: Aspartate--tRNA ligase (595 aa).

Glu173 is an L-aspartate binding site. Residues 197–200 (QLFK) are aspartate. Position 219 (Arg219) interacts with L-aspartate. ATP contacts are provided by residues 219-221 (RDE) and Gln228. His449 serves as a coordination point for L-aspartate. Position 483 (Glu483) interacts with ATP. An L-aspartate-binding site is contributed by Arg490. Residue 535 to 538 (GLDR) coordinates ATP.

It belongs to the class-II aminoacyl-tRNA synthetase family. Type 1 subfamily. Homodimer.

It localises to the cytoplasm. The catalysed reaction is tRNA(Asp) + L-aspartate + ATP = L-aspartyl-tRNA(Asp) + AMP + diphosphate. Its function is as follows. Catalyzes the attachment of L-aspartate to tRNA(Asp) in a two-step reaction: L-aspartate is first activated by ATP to form Asp-AMP and then transferred to the acceptor end of tRNA(Asp). This is Aspartate--tRNA ligase from Shewanella sediminis (strain HAW-EB3).